Here is a 211-residue protein sequence, read N- to C-terminus: FMN-dependent NADH:quinone oxidoreductase (211 aa).

FMN contacts are provided by residues 17–19 (SYS) and 99–102 (MWNF).

Belongs to the azoreductase type 1 family. In terms of assembly, homodimer. The cofactor is FMN.

It carries out the reaction 2 a quinone + NADH + H(+) = 2 a 1,4-benzosemiquinone + NAD(+). The enzyme catalyses N,N-dimethyl-1,4-phenylenediamine + anthranilate + 2 NAD(+) = 2-(4-dimethylaminophenyl)diazenylbenzoate + 2 NADH + 2 H(+). Quinone reductase that provides resistance to thiol-specific stress caused by electrophilic quinones. In terms of biological role, also exhibits azoreductase activity. Catalyzes the reductive cleavage of the azo bond in aromatic azo compounds to the corresponding amines. The sequence is that of FMN-dependent NADH:quinone oxidoreductase from Exiguobacterium sp. (strain ATCC BAA-1283 / AT1b).